The primary structure comprises 216 residues: 3-isopropylmalate dehydratase small subunit 1 (216 aa).

This sequence belongs to the LeuD family. LeuD type 1 subfamily. In terms of assembly, heterodimer of LeuC and LeuD.

It catalyses the reaction (2R,3S)-3-isopropylmalate = (2S)-2-isopropylmalate. Its pathway is amino-acid biosynthesis; L-leucine biosynthesis; L-leucine from 3-methyl-2-oxobutanoate: step 2/4. Functionally, catalyzes the isomerization between 2-isopropylmalate and 3-isopropylmalate, via the formation of 2-isopropylmaleate. This Bordetella bronchiseptica (strain ATCC BAA-588 / NCTC 13252 / RB50) (Alcaligenes bronchisepticus) protein is 3-isopropylmalate dehydratase small subunit 1.